The following is a 602-amino-acid chain: Glutamine--fructose-6-phosphate aminotransferase [isomerizing] (602 aa).

The active-site Nucleophile; for GATase activity is the C2. The 221-residue stretch at 2 to 222 (CGIFGIIFAE…DGEYGYITAG (221 aa)) folds into the Glutamine amidotransferase type-2 domain. 2 SIS domains span residues 284 to 422 (VANA…ALGH) and 452 to 592 (LAKR…PDKP). Catalysis depends on K597, which acts as the For Fru-6P isomerization activity.

As to quaternary structure, homodimer.

The protein localises to the cytoplasm. The catalysed reaction is D-fructose 6-phosphate + L-glutamine = D-glucosamine 6-phosphate + L-glutamate. Catalyzes the first step in hexosamine metabolism, converting fructose-6P into glucosamine-6P using glutamine as a nitrogen source. In Pyrobaculum aerophilum (strain ATCC 51768 / DSM 7523 / JCM 9630 / CIP 104966 / NBRC 100827 / IM2), this protein is Glutamine--fructose-6-phosphate aminotransferase [isomerizing].